The following is a 222-amino-acid chain: Tetratricopeptide repeat protein 9A (222 aa).

Disordered stretches follow at residues 1-49 and 88-116; these read MERK…AAAE and KGLLPPPGERERDSRPASPAGALKPGRLS. A TPR 1 repeat occupies 56-89; it reads RAHEFKSQGAQCYKDKKFREAIGKYHRALLELKG. Ser-105 carries the phosphoserine modification. TPR repeat units follow at residues 125-160 and 161-194; these read AIEIDCYNSLAACLLQAELVNYERVKEYCLKVLKKE and GENFKALYRSGVAFYHLGDYDKALYYLKEARTQQ.

The protein belongs to the TTC9 family.

This is Tetratricopeptide repeat protein 9A (TTC9) from Homo sapiens (Human).